The following is a 1278-amino-acid chain: Botulinum neurotoxin type F (1278 aa).

A Zn(2+)-binding site is contributed by H227. E228 is a catalytic residue. Residues H231 and E266 each contribute to the Zn(2+) site. C429 and C445 are joined by a disulfide. The interval 440–862 (APPRLCIRVN…KILILYFNKL (423 aa)) is translocation domain (TD). A belt region spans residues 485–534 (NNLDEVILDYNSETIPQISNQTLNTLVQDDSYVPRYDSNGTSEIEEHNVV). The stretch at 717–783 (NKRKEQMYQA…MENIERFITE (67 aa)) forms a coiled coil. The tract at residues 864 to 1085 (KKIKDNSILD…EIETLYSDEP (222 aa)) is N-terminus of receptor binding domain (N-RBD). The interval 1086–1278 (DPSILKDFWG…ISKEHGWQEN (193 aa)) is C-terminus of receptor binding domain (C-RBD). R1111 and E1195 together coordinate a ganglioside GD1a (d18:1(4E)). 2 host ganglioside GD1a binding regions span residues 1240 to 1241 (FH) and 1248 to 1250 (SSW). Residues 1245–1248 (LVAS) carry the Host ganglioside-binding motif motif. R1256 is an a ganglioside GD1a (d18:1(4E)) binding site.

It belongs to the peptidase M27 family. As to quaternary structure, heterodimer; disulfide-linked heterodimer of a light chain (LC) and a heavy chain (HC). The LC has the proteolytic/pharmacological activity, while the N- and C-terminal of the HC mediate channel formation and toxin binding, respectively. Interacts with host synaptic vesicle glycoproteins SV2A, SV2B and SV2C. HC interacts with a complex including at least host SV2 and synaptotagmin-1 (SYT1); copurification depends on glycosylation of SV2. Requires Zn(2+) as cofactor.

Its subcellular location is the secreted. The protein localises to the host cytoplasm. It is found in the host cytosol. The protein resides in the host synapse. It localises to the host presynaptic cell membrane. Its subcellular location is the host cytoplasmic vesicle. The protein localises to the host secretory vesicle. It is found in the host synaptic vesicle membrane. The catalysed reaction is Limited hydrolysis of proteins of the neuroexocytosis apparatus, synaptobrevins, SNAP25 or syntaxin. No detected action on small molecule substrates.. In terms of biological role, botulinum toxin causes flaccid paralysis by inhibiting neurotransmitter (acetylcholine) release from the presynaptic membranes of nerve terminals of the eukaryotic host skeletal and autonomic nervous system, with frequent heart or respiratory failure. Precursor of botulinum neurotoxin F which may have 2 coreceptors; complex polysialylated gangliosides found on neural tissue and specific membrane-anchored proteins found in synaptic vesicles. Receptor proteins are exposed on host presynaptic cell membrane during neurotransmitter release, when the toxin heavy chain (HC) binds to them. Upon synaptic vesicle recycling the toxin is taken up via the endocytic pathway. When the pH of the toxin-containing endosome drops a structural rearrangement occurs so that the N-terminus of the HC forms pores that allows the light chain (LC) to translocate into the cytosol. Once in the cytosol the disulfide bond linking the 2 subunits is reduced and LC cleaves its target protein on synaptic vesicles, preventing their fusion with the cytoplasmic membrane and thus neurotransmitter release. Requires complex gangliosides for full neurotoxicity. Electrical stimulation increases uptake of toxin, presumably by transiently exposing a receptor usually found in eukaryotic target synaptic vesicles. Blocks neurotransmitter release by cleaving synaptobrevin-2/VAMP2. It is not clear whether a synaptic vesicle protein acts as its receptor; there is evidence for and against SV2 fulfilling this function. Functionally, has protease activity. After translocation into the eukaryotic host cytosol, inhibits neurotransmitter release by acting as a zinc endopeptidase that catalyzes the hydrolysis of the '58-Gln-|-Lys-59' bond of synaptobrevin-2/VAMP2 and probably also the equivalent 'Gln-|-Lys' sites in VAMP1 and VAMP3. Substrate specificity is conferred by multiple interactions of LC with substrate. Its function is as follows. Responsible for host epithelial cell transcytosis, host nerve cell targeting and translocation of light chain (LC) into host cytosol. Composed of 3 subdomains; the translocation domain (TD), and N-terminus and C-terminus of the receptor-binding domain (RBD). The RBD is responsible for the adherence of the toxin to the cell surface. The N-terminus of the TD wraps an extended belt around the perimeter of the LC, protecting Zn(2+) in the active site; it may also prevent premature LC dissociation from the translocation channel and protect toxin prior to translocation. Isolated HC binds to host synaptosomes and neurons, significantly decreases uptake and toxicity of whole BoNT/F. Interferes with uptake of BoNT/E and to a lesser extent BoNT/C. in vitro binds gangliosides GT1b, GD1b and GD1a. Binds to synaptic vesicle glycoproteins SV2A, SV2B and SV2C which may serve as coreceptors with gangliosides. Interaction with SV2 proteins requires SV2 glycosylation. However knockout SV2A/SV2B mice still cleave synaptobrevin, leaving the identification of its receptor unclear. The chain is Botulinum neurotoxin type F from Clostridium botulinum (strain Langeland / NCTC 10281 / Type F).